Consider the following 344-residue polypeptide: uncharacterized protein (344 aa).

Residues 221–249 (IQAQSMDEQKQIQEIYQNVEKLKEDVTKN) adopt a coiled-coil conformation.

This sequence belongs to the IIV-6 287R family.

This is an uncharacterized protein from Aedes vexans (Inland floodwater mosquito).